The primary structure comprises 293 residues: tRNA pseudouridine synthase B (293 aa).

Residue D39 is the Nucleophile of the active site.

The protein belongs to the pseudouridine synthase TruB family. Type 1 subfamily.

The enzyme catalyses uridine(55) in tRNA = pseudouridine(55) in tRNA. Responsible for synthesis of pseudouridine from uracil-55 in the psi GC loop of transfer RNAs. This chain is tRNA pseudouridine synthase B, found in Rickettsia bellii (strain OSU 85-389).